A 101-amino-acid polypeptide reads, in one-letter code: Small ribosomal subunit protein uS14 (101 aa).

Belongs to the universal ribosomal protein uS14 family. As to quaternary structure, part of the 30S ribosomal subunit. Contacts proteins S3 and S10.

Binds 16S rRNA, required for the assembly of 30S particles and may also be responsible for determining the conformation of the 16S rRNA at the A site. This is Small ribosomal subunit protein uS14 from Cellvibrio japonicus (strain Ueda107) (Pseudomonas fluorescens subsp. cellulosa).